A 220-amino-acid chain; its full sequence is Large ribosomal subunit protein uL3 (220 aa).

The segment at 132–153 (SGRASHGNSRSHNVPGSIGMAQ) is disordered. Polar residues predominate over residues 133–145 (GRASHGNSRSHNV). Position 153 is an N5-methylglutamine (Gln153).

It belongs to the universal ribosomal protein uL3 family. As to quaternary structure, part of the 50S ribosomal subunit. Forms a cluster with proteins L14 and L19. In terms of processing, methylated by PrmB.

Its function is as follows. One of the primary rRNA binding proteins, it binds directly near the 3'-end of the 23S rRNA, where it nucleates assembly of the 50S subunit. This Ralstonia nicotianae (strain ATCC BAA-1114 / GMI1000) (Ralstonia solanacearum) protein is Large ribosomal subunit protein uL3.